The sequence spans 298 residues: Probable endonuclease 4 (298 aa).

Positions 69, 111, 146, 180, 183, 215, 228, 230, and 260 each coordinate Zn(2+).

Belongs to the AP endonuclease 2 family. It depends on Zn(2+) as a cofactor.

The enzyme catalyses Endonucleolytic cleavage to 5'-phosphooligonucleotide end-products.. In terms of biological role, endonuclease IV plays a role in DNA repair. It cleaves phosphodiester bonds at apurinic or apyrimidinic (AP) sites, generating a 3'-hydroxyl group and a 5'-terminal sugar phosphate. The protein is Probable endonuclease 4 of Bacillus cytotoxicus (strain DSM 22905 / CIP 110041 / 391-98 / NVH 391-98).